The sequence spans 73 residues: Protein RALF-like 10 (73 aa).

A signal peptide spans 1–17 (MKALVICLLVIFAAVIA). 2 cysteine pairs are disulfide-bonded: C35–C44 and C64–C70.

It belongs to the plant rapid alkalinization factor (RALF) family. In terms of tissue distribution, expressed in flowers.

It is found in the secreted. Cell signaling peptide that may regulate plant stress, growth, and development. Mediates a rapid alkalinization of extracellular space by mediating a transient increase in the cytoplasmic Ca(2+) concentration leading to a calcium-dependent signaling events through a cell surface receptor and a concomitant activation of some intracellular mitogen-activated protein kinases. This chain is Protein RALF-like 10 (RALFL10), found in Arabidopsis thaliana (Mouse-ear cress).